A 356-amino-acid polypeptide reads, in one-letter code: Protein trichome birefringence-like 41 (356 aa).

A helical; Signal-anchor for type II membrane protein membrane pass occupies residues S12–A31. The GDS motif signature appears at G107–S109. Positions D333 to N347 match the DCXHWCLPGXXDXWN motif motif.

Belongs to the PC-esterase family. TBL subfamily.

The protein localises to the membrane. In terms of biological role, may act as a bridging protein that binds pectin and other cell wall polysaccharides. Probably involved in maintaining esterification of pectins. May be involved in the specific O-acetylation of cell wall polymers. The sequence is that of Protein trichome birefringence-like 41 (TBL41) from Arabidopsis thaliana (Mouse-ear cress).